The sequence spans 311 residues: Taste receptor type 2 member 40 (311 aa).

Topologically, residues 1–9 are extracellular; sequence MSSLFSSFC. Residues 10 to 30 form a helical membrane-spanning segment; it reads LVIAIFESVVGLLGNGTIVAV. The Cytoplasmic portion of the chain corresponds to 31–55; it reads SSTSCIRSKILSSYDVIVIFLSLSR. The helical transmembrane segment at 56 to 76 threads the bilayer; that stretch reads FFLQLWMILDFLLIFFCQPSY. Topologically, residues 77–87 are extracellular; sequence YEENLFVTFKT. A helical transmembrane segment spans residues 88-108; the sequence is VFIFLNSYSFWFAAWLSVFYC. The Cytoplasmic portion of the chain corresponds to 109 to 128; that stretch reads VKVASFTQSFLSWLKQRIAS. A helical membrane pass occupies residues 129 to 149; the sequence is LIPWMLITSSLFSFATSLPFF. Over 150–178 the chain is Extracellular; the sequence is WDSYNAHSNFTTPLTMTNSSKRITTRKTN. The helical transmembrane segment at 179–199 threads the bilayer; the sequence is LIFLILLCNVGIALPSIMLVF. Over 200 to 235 the chain is Cytoplasmic; that stretch reads SSILLIRSLWRHTRQMQNNATGFRDPSLEALIGAIK. The helical transmembrane segment at 236 to 256 threads the bilayer; that stretch reads TVFSFLLLYITNFIALILILS. The Extracellular segment spans residues 257–266; the sequence is DTFVPLSTEE. A helical transmembrane segment spans residues 267 to 287; it reads AICVVVVAACPAGQSMVLIWS. Over 288 to 311 the chain is Cytoplasmic; sequence NPRFRELLSSILHYVNSCVRARCS.

It belongs to the G-protein coupled receptor T2R family. Expressed in the oral cavity, as well as in the gastrointestinal tract, including in the upper palate, tongue, proventriculus, ventriculus, duodenum, jejunum, ileum, cecum and colon.

It localises to the cell membrane. Functionally, bitter taste receptor. Binds quinine, dextromethorphan, diphenhydramine, diphenidol, chlorpheniramine, diphenidol, chloramphenicol, chloroquine and coumarin, this latter being a weak agonist, as well as epiquinidine, ethylhydrocupreine and quinidine. The protein is Taste receptor type 2 member 40 (TAS2R40) of Gallus gallus (Chicken).